Here is a 39-residue protein sequence, read N- to C-terminus: Photosystem II reaction center protein J (39 aa).

The helical transmembrane segment at 9–29 (LWMVATVGGLAAGGLLILFVF) threads the bilayer.

The protein belongs to the PsbJ family. As to quaternary structure, PSII is composed of 1 copy each of membrane proteins PsbA, PsbB, PsbC, PsbD, PsbE, PsbF, PsbH, PsbI, PsbJ, PsbK, PsbL, PsbM, PsbT, PsbX, PsbY, PsbZ, Psb30/Ycf12, at least 3 peripheral proteins of the oxygen-evolving complex and a large number of cofactors. It forms dimeric complexes.

It is found in the plastid. Its subcellular location is the chloroplast thylakoid membrane. In terms of biological role, one of the components of the core complex of photosystem II (PSII). PSII is a light-driven water:plastoquinone oxidoreductase that uses light energy to abstract electrons from H(2)O, generating O(2) and a proton gradient subsequently used for ATP formation. It consists of a core antenna complex that captures photons, and an electron transfer chain that converts photonic excitation into a charge separation. The protein is Photosystem II reaction center protein J of Emiliania huxleyi (Coccolithophore).